Reading from the N-terminus, the 119-residue chain is UPF0102 protein GFO_3098 (119 aa).

Belongs to the UPF0102 family.

The protein is UPF0102 protein GFO_3098 of Christiangramia forsetii (strain DSM 17595 / CGMCC 1.15422 / KT0803) (Gramella forsetii).